The sequence spans 97 residues: Nuclear protein 2 (97 aa).

The disordered stretch occupies residues 76–97 (LLNGQRKRRQRQLHPKMRTRLT). The segment covering 80 to 97 (QRKRRQRQLHPKMRTRLT) has biased composition (basic residues).

The protein belongs to the NUPR family.

The protein resides in the nucleus. Its function is as follows. Acts as a transcriptional repressor by inhibiting gene expression at the NUPR1 promoter in a p53/TP53-dependent manner in cancer cells. Involved in the G1 cell cycle arrest, and in a decrease in cell viability and cell proliferation. Plays a role as a negative regulator of the protumoral factor NUPR1. In Homo sapiens (Human), this protein is Nuclear protein 2.